A 215-amino-acid chain; its full sequence is N-(5'-phosphoribosyl)anthranilate isomerase (215 aa).

The protein belongs to the TrpF family.

The enzyme catalyses N-(5-phospho-beta-D-ribosyl)anthranilate = 1-(2-carboxyphenylamino)-1-deoxy-D-ribulose 5-phosphate. The protein operates within amino-acid biosynthesis; L-tryptophan biosynthesis; L-tryptophan from chorismate: step 3/5. In Chlorobium phaeobacteroides (strain DSM 266 / SMG 266 / 2430), this protein is N-(5'-phosphoribosyl)anthranilate isomerase.